The chain runs to 159 residues: MNISIISVGKIKEKFLKAAIDEYSKRLSKYCKLNIIEVTDEKTPDNASLKEENIIKDKEGNLILKHIKDNSFVIALDLKGKSITSEEFSGLIENCRLTGNSTIAFVIGGSLGLSEQVLSRANYKLSFSKMTFPHQLFRVMLLEQVYRAFRILCGEPYHK.

Residues Leu-76, Gly-108, and 127-132 (FSKMTF) contribute to the S-adenosyl-L-methionine site.

This sequence belongs to the RNA methyltransferase RlmH family. In terms of assembly, homodimer.

It localises to the cytoplasm. It catalyses the reaction pseudouridine(1915) in 23S rRNA + S-adenosyl-L-methionine = N(3)-methylpseudouridine(1915) in 23S rRNA + S-adenosyl-L-homocysteine + H(+). Specifically methylates the pseudouridine at position 1915 (m3Psi1915) in 23S rRNA. This Clostridium botulinum (strain Langeland / NCTC 10281 / Type F) protein is Ribosomal RNA large subunit methyltransferase H.